The following is an 85-amino-acid chain: Sec-independent protein translocase protein TatA (85 aa).

A helical transmembrane segment spans residues 1 to 21 (MGGISIWQLLIIALIVVLLFG). The segment at 43-85 (MSSEEDKKALEDAEAAKPVQTAQTAQPTQQATEKKPESNKEQA) is disordered. Basic and acidic residues predominate over residues 46 to 57 (EEDKKALEDAEA). Residues 58–73 (AKPVQTAQTAQPTQQA) show a composition bias toward low complexity. The segment covering 74 to 85 (TEKKPESNKEQA) has biased composition (basic and acidic residues).

The protein belongs to the TatA/E family. As to quaternary structure, the Tat system comprises two distinct complexes: a TatABC complex, containing multiple copies of TatA, TatB and TatC subunits, and a separate TatA complex, containing only TatA subunits. Substrates initially bind to the TatABC complex, which probably triggers association of the separate TatA complex to form the active translocon.

Its subcellular location is the cell inner membrane. Part of the twin-arginine translocation (Tat) system that transports large folded proteins containing a characteristic twin-arginine motif in their signal peptide across membranes. TatA could form the protein-conducting channel of the Tat system. In Shewanella sp. (strain MR-4), this protein is Sec-independent protein translocase protein TatA.